The primary structure comprises 106 residues: Thioredoxin (106 aa).

The Thioredoxin domain maps to 2 to 106 (VQVISNLDEF…LESLVQKSLA (105 aa)). Catalysis depends on nucleophile residues C30 and C33. C30 and C33 are joined by a disulfide.

This sequence belongs to the thioredoxin family.

Its function is as follows. Participates in various redox reactions through the reversible oxidation of its active center dithiol to a disulfide and catalyzes dithiol-disulfide exchange reactions. This is Thioredoxin from Coprinus comatus (Shaggy mane).